The chain runs to 328 residues: D-cysteine desulfhydrase (328 aa).

K51 carries the N6-(pyridoxal phosphate)lysine modification.

This sequence belongs to the ACC deaminase/D-cysteine desulfhydrase family. As to quaternary structure, homodimer. Pyridoxal 5'-phosphate is required as a cofactor.

It carries out the reaction D-cysteine + H2O = hydrogen sulfide + pyruvate + NH4(+) + H(+). Functionally, catalyzes the alpha,beta-elimination reaction of D-cysteine and of several D-cysteine derivatives. It could be a defense mechanism against D-cysteine. This chain is D-cysteine desulfhydrase, found in Escherichia fergusonii (strain ATCC 35469 / DSM 13698 / CCUG 18766 / IAM 14443 / JCM 21226 / LMG 7866 / NBRC 102419 / NCTC 12128 / CDC 0568-73).